A 477-amino-acid chain; its full sequence is 3-sulfolactaldehyde dehydrogenase (477 aa).

232 to 233 (GS) provides a ligand contact to NAD(+). The active-site Proton acceptor is glutamate 252. NAD(+) is bound at residue leucine 253. Cysteine 286 acts as the Nucleophile in catalysis. Residue glutamate 380 coordinates NAD(+).

The protein belongs to the aldehyde dehydrogenase family.

It carries out the reaction (2S)-3-sulfolactaldehyde + NAD(+) + H2O = (2S)-3-sulfolactate + NADH + 2 H(+). Functionally, part of the sulfo-TAL (or sulfo-SFT) pathway, a D-sulfoquinovose degradation pathway that produces sulfolactate (SL). Catalyzes the oxidation of 3-sulfolactaldehyde (SLA) to sulfolactate (SL). The chain is 3-sulfolactaldehyde dehydrogenase from Priestia aryabhattai (Bacillus aryabhattai).